Consider the following 165-residue polypeptide: MGNLFKIGQIINTHGIKGEVKVYPLTEDVNKFKRLETVLVGGEEKKILGVKFQKDRVILKIEGIDSMNDAETYKQKYIEIPRENEPELPPDTYYVSDLKECTIYDTNEKEIGRIFDVISTPNNDVYWIKEPKELLIPVLRDIVLDIDIKLKKIIIKPVGEWQDED.

A PRC barrel domain is found at 90 to 161 (PDTYYVSDLK…KIIIKPVGEW (72 aa)).

This sequence belongs to the RimM family. As to quaternary structure, binds ribosomal protein uS19.

Its subcellular location is the cytoplasm. Functionally, an accessory protein needed during the final step in the assembly of 30S ribosomal subunit, possibly for assembly of the head region. Essential for efficient processing of 16S rRNA. May be needed both before and after RbfA during the maturation of 16S rRNA. It has affinity for free ribosomal 30S subunits but not for 70S ribosomes. The polypeptide is Ribosome maturation factor RimM (Clostridium beijerinckii (strain ATCC 51743 / NCIMB 8052) (Clostridium acetobutylicum)).